We begin with the raw amino-acid sequence, 506 residues long: Anaerobic nitric oxide reductase transcription regulator NorR (506 aa).

Position 57 is a 4-aspartylphosphate (Asp-57). Residues 187–416 (MIGLSPAMTQ…LEHAIHRAVV (230 aa)) form the Sigma-54 factor interaction domain. Residues 215–222 (GETGTGKE) and 278–287 (ADNGTLFLDE) contribute to the ATP site. The H-T-H motif DNA-binding region spans 481-500 (WAASARALETDVANLHRLAK).

The protein operates within nitrogen metabolism; nitric oxide reduction. Its function is as follows. Required for the expression of anaerobic nitric oxide (NO) reductase, acts as a transcriptional activator for at least the norVW operon. Activation also requires sigma-54. This chain is Anaerobic nitric oxide reductase transcription regulator NorR, found in Salmonella choleraesuis (strain SC-B67).